Consider the following 83-residue polypeptide: Exodeoxyribonuclease 7 small subunit (83 aa).

Belongs to the XseB family. In terms of assembly, heterooligomer composed of large and small subunits.

Its subcellular location is the cytoplasm. It carries out the reaction Exonucleolytic cleavage in either 5'- to 3'- or 3'- to 5'-direction to yield nucleoside 5'-phosphates.. Functionally, bidirectionally degrades single-stranded DNA into large acid-insoluble oligonucleotides, which are then degraded further into small acid-soluble oligonucleotides. This chain is Exodeoxyribonuclease 7 small subunit, found in Novosphingobium aromaticivorans (strain ATCC 700278 / DSM 12444 / CCUG 56034 / CIP 105152 / NBRC 16084 / F199).